The sequence spans 352 residues: RAD51-associated protein 1 (352 aa).

Over residues 1 to 10 (MVRPVRHKKP) the composition is skewed to basic residues. 2 disordered regions span residues 1–78 (MVRP…TFSI) and 115–144 (TNVQNSQDKSIEKHGSSKIETMNKSPHISN). Phosphoserine occurs at positions 19 and 21. The segment at 30 to 49 (VPLNKKSRTAPKELKQDKPK) is interaction with DNA. Residues 39-72 (APKELKQDKPKPNLNNLRKEEIPVQEKTPKKRLP) show a composition bias toward basic and acidic residues. At Thr-66 the chain carries Phosphothreonine. Ser-120 and Ser-124 each carry phosphoserine. Positions 132-144 (KIETMNKSPHISN) are enriched in polar residues. The SIM motif motif lies at 154-159 (LDKITV). Residues 162-323 (DVGGVQGKRK…RSSSSPLVVV (162 aa)) are disordered. Acidic residues predominate over residues 188–221 (SDGDSANDTEPDFAPGEDSEDDSDFCESEDNDED). The span at 229 to 247 (VKEIKKKEVKVKSPVEKKE) shows a compositional bias: basic and acidic residues. The interval 243–304 (VEKKEKKSKS…PSAESKKPKW (62 aa)) is interaction with DNA. A Glycyl lysine isopeptide (Lys-Gly) (interchain with G-Cter in ubiquitin; alternate) cross-link involves residue Lys-251. Lys-269 participates in a covalent cross-link: Glycyl lysine isopeptide (Lys-Gly) (interchain with G-Cter in SUMO). Residues 270–284 (SESQSLPKKVSLSSD) show a composition bias toward polar residues. Ser-280 carries the post-translational modification Phosphoserine. The short motif at 304–307 (WVPP) is the WVPP motif element. The segment covering 306–323 (PPAASGGSRSSSSPLVVV) has biased composition (low complexity). Positions 313-352 (SRSSSSPLVVVSVKSPNQSLRLGLSRLARVKPLHPNATST) are interaction with RAD51. Ser-327 carries the phosphoserine modification.

Monomer; elongated monodisperse monomer. Interacts (via C-terminal region) with RAD51; the interaction is direct. Interacts (via SIM motif) with WDR48/UAF1; WDR48/UAF1 and RAD51AP1 cooperate together to stimulate RAD51-mediated homologous recombination (HR). Interacts (via WVPP motif) with DMC1; the interaction is direct. Interacts with PALB2. Interacts with RAD52. In terms of assembly, does not interact with DMC1; lack of interaction is caused by the absence of the WVPP motif in this isoform. In terms of processing, sumoylation with SUMO2/3 by NSMCE2/MMS21 promotes stabilization, possibly by preventing ubiquitination. Sumoylation is required for alternative lengthening of telomeres (ALT) pathway. As to expression, highly expressed in testis and thymus. Lower levels in colon and small intestine. Little or no expression in spleen, prostate, ovary and peripheral blood leukocytes.

The protein localises to the chromosome. Its subcellular location is the nucleus. It is found in the telomere. Its function is as follows. Structure-specific DNA-binding protein involved in DNA repair by promoting RAD51-mediated homologous recombination. Acts by stimulating D-Loop formation by RAD51: specifically enhances joint molecule formation through its structure-specific DNA interaction and its interaction with RAD51. Binds single-stranded DNA (ssDNA), double-stranded DNA (dsDNA) and secondary DNA structures, such as D-loop structures: has a strong preference for branched-DNA structures that are obligatory intermediates during joint molecule formation. Cooperates with WDR48/UAF1 to stimulate RAD51-mediated homologous recombination: both WDR48/UAF1 and RAD51AP1 have coordinated role in DNA-binding during homologous recombination and DNA repair. WDR48/UAF1 and RAD51AP1 also have a coordinated role in DNA-binding to promote USP1-mediated deubiquitination of FANCD2. Also involved in meiosis by promoting DMC1-mediated homologous meiotic recombination. Key mediator of alternative lengthening of telomeres (ALT) pathway, a homology-directed repair mechanism of telomere elongation that controls proliferation in aggressive cancers, by stimulating homologous recombination. May also bind RNA; additional evidences are however required to confirm RNA-binding in vivo. The protein is RAD51-associated protein 1 of Homo sapiens (Human).